Reading from the N-terminus, the 104-residue chain is uncharacterized protein (104 aa).

A signal peptide spans 1–25; that stretch reads MVSSFFMASTLLAISSCFNSSISRA. A helical transmembrane segment spans residues 79–99; sequence IPVVIVVEISSTLVLLLSAFL.

The protein resides in the membrane. This is an uncharacterized protein from Saccharomyces cerevisiae (strain ATCC 204508 / S288c) (Baker's yeast).